Reading from the N-terminus, the 87-residue chain is U3-theraphotoxin-Hhn1j (87 aa).

The N-terminal stretch at Met-1–Ala-24 is a signal peptide. Positions Ser-25–Arg-52 are excised as a propeptide. Cystine bridges form between Cys-54/Cys-67, Cys-61/Cys-72, and Cys-66/Cys-79.

This sequence belongs to the neurotoxin 10 (Hwtx-1) family. 51 (Hntx-8) subfamily. Hntx-8 sub-subfamily. As to expression, expressed by the venom gland.

It localises to the secreted. Its function is as follows. Ion channel inhibitor. This is U3-theraphotoxin-Hhn1j from Cyriopagopus hainanus (Chinese bird spider).